The sequence spans 189 residues: GTPase NRas (189 aa).

Residues Gly-10–Ala-18 and Val-29–Asp-30 contribute to the GTP site. An Effector region motif is present at residues Tyr-32–Tyr-40. Asp-57–Gln-61 contacts GTP. Ser-89 carries the phosphoserine modification. Asn-116–Asp-119 provides a ligand contact to GTP. Residues Tyr-166–Pro-185 are hypervariable region. A Glycyl lysine isopeptide (Lys-Gly) (interchain with G-Cter in ubiquitin) cross-link involves residue Lys-170. A lipid anchor (S-palmitoyl cysteine) is attached at Cys-181. The S-farnesyl cysteine moiety is linked to residue Cys-186. Residues Val-187–Met-189 constitute a propeptide, removed in mature form.

Belongs to the small GTPase superfamily. Ras family. In terms of assembly, interacts (active GTP-bound form preferentially) with RGS14. Interacts (active GTP-bound form) with RASSF7. Interacts (active GTP-bound form) with both SHOC2 and PP1c (all isoforms) to form a tertiary complex; SHOC2 and PP1c preferably bind M-Ras/MRAS, but they also bind K-Ras/KRAS, N-Ras/NRAS and H-Ras/HRAS. Palmitoylated by the ZDHHC9-GOLGA7 complex. Depalmitoylated by ABHD17A, ABHD17B and ABHD17C. A continuous cycle of de- and re-palmitoylation regulates rapid exchange between plasma membrane and Golgi. Post-translationally, acetylation at Lys-104 prevents interaction with guanine nucleotide exchange factors (GEFs). In terms of processing, ubiquitinated by the BCR(LZTR1) E3 ubiquitin ligase complex at Lys-170 in a non-degradative manner, leading to inhibit Ras signaling by decreasing Ras association with membranes. Phosphorylation at Ser-89 enhances NRAS association with its downstream effectors.

It is found in the cell membrane. Its subcellular location is the golgi apparatus membrane. The enzyme catalyses GTP + H2O = GDP + phosphate + H(+). Its activity is regulated as follows. Alternates between an inactive form bound to GDP and an active form bound to GTP. Activated by a guanine nucleotide-exchange factor (GEF) and inactivated by a GTPase-activating protein (GAP). In terms of biological role, ras proteins bind GDP/GTP and possess intrinsic GTPase activity. This Cavia porcellus (Guinea pig) protein is GTPase NRas (NRAS).